A 773-amino-acid polypeptide reads, in one-letter code: Disintegrin and metalloproteinase domain-containing protein 11 (773 aa).

Residues 1–24 form the signal peptide; it reads MRRLRRWAIAALLLLPLLPPPGLG. Positions 25–229 are excised as a propeptide; that stretch reads ALGPRGALHW…PNWPKLRRKR (205 aa). Positions 36–82 are disordered; it reads SSAHVGSPESPEGSEVTEPSRLVRQSSGGEVRKPQLDTRVRQDPPRG. A compositionally biased stretch (basic and acidic residues) spans 65–79; the sequence is EVRKPQLDTRVRQDP. 2 N-linked (GlcNAc...) asparagine glycosylation sites follow: N100 and N167. Residues 230-738 lie on the Extracellular side of the membrane; the sequence is QVRRGHPTVH…ERYKGPSGTN (509 aa). In terms of domain architecture, Peptidase M12B spans 243 to 442; that stretch reads KYVELIVIND…GGGSCLFNKP (200 aa). Residues 336 to 773 form a required for localization to cerebellar cortex basket cell terminals. Also required for localization of KCNA1, KCNA2, DLG4 and ADAM22 to cerebellar cortex basket cell terminal perisomatic axons and pinceaux region; that stretch reads GRTFQSTSSG…NIRRGRSGGA (438 aa). Intrachain disulfides connect C353–C437, C396–C421, C398–C405, and C507–C527. The region spanning 448–535 is the Disintegrin domain; the sequence is PPECGNGFVE…QCPPNLHKLD (88 aa). N-linked (GlcNAc...) asparagine glycosylation is found at N609 and N677. 3 cysteine pairs are disulfide-bonded: C681–C696, C690–C702, and C704–C713. Positions 681–713 constitute an EGF-like domain; sequence CPGSGERRICSHHGVCSNEGKCICQPDWTGKDC. A helical membrane pass occupies residues 739 to 759; that stretch reads IIIGSIAGAVLVAAIVLGGTG. Residues 760–773 are Cytoplasmic-facing; the sequence is WGFKNIRRGRSGGA.

As to quaternary structure, interacts with LGI1 and LGI4. Interacts with KCNA1/KV1.1, KCNA2/KV1.2, DLG4/PSD-95 and ADAM22. The precursor is cleaved by a furin endopeptidase. As to expression, abundantly expressed in cerebellar cortex basket cell terminals and pinceaux, weakly expressed in Purkinje cells (at protein level). Weakly expressed in the heart. Abundantly in expressed in neurons throughout the central nervous system including the telencephalon, diencephalic and brainstem nuclei, cerebellum and spinal cord. Expressed in the peripheral nervous system trigeminal and dorsal root ganglia. Expressed in the ganglion and bipolar cells of the retinae and weakly in the cornea of the eyes. Expressed in the hepatocytes of the parenchyma and hepatic lobules of the liver. Expressed in distinct focal areas in the juxtamedullary cortex of the kidney. Expressed in spermatocytes in the seminiferous tubules of the testes. Expressed in the stratum spinosum of the stratified squamous epithelia of the tongue and esophagus.

It localises to the presynaptic cell membrane. The protein localises to the perikaryon. Its subcellular location is the cell projection. It is found in the axon. In terms of biological role, probable ligand for integrin in the brain. This is a non catalytic metalloprotease-like protein. Required for localization of the potassium channel subunit proteins KCNA1/KV1.1 and KCNA2/KV1.2 at cerebellar cortex basket cell distal terminals, is thereby involved in ephaptic inhibitory synchronization of Purkinje cell firing and response to stress. Plays a role in spatial learning and motor coordination. Involved in the nociceptive pain response to chemical-derived stimulation. The protein is Disintegrin and metalloproteinase domain-containing protein 11 (Adam11) of Mus musculus (Mouse).